Here is a 283-residue protein sequence, read N- to C-terminus: MGSAGLIEIKRRIKSVESTRKITNAMGLVATSKLRKTRKELFINKKFFEETEKIIEKLASTISQDDDSIYFKSNKSKYKLYILVSSDTGLCGSYNNTVVSYLDSLVRDEKENIKVITVGSKGLSYVKRIGLDTIADYVDIPDIPTVKEVKIVFESALKMYKDGEVSEINVAYLDFVSPVKQEPKAEKLLPIEKITSVPEEFITEPNSEEVLNNALNIHLKGKFRNILLSAKCSEQSSRMTAMNGATQNANDILDNLNLKYNRIRQQIITQEISEIVGGAEAQK.

The protein belongs to the ATPase gamma chain family. As to quaternary structure, F-type ATPases have 2 components, CF(1) - the catalytic core - and CF(0) - the membrane proton channel. CF(1) has five subunits: alpha(3), beta(3), gamma(1), delta(1), epsilon(1). CF(0) has three main subunits: a, b and c.

Its subcellular location is the cell membrane. Its function is as follows. Produces ATP from ADP in the presence of a proton gradient across the membrane. The gamma chain is believed to be important in regulating ATPase activity and the flow of protons through the CF(0) complex. The sequence is that of ATP synthase gamma chain from Clostridium botulinum (strain Eklund 17B / Type B).